The primary structure comprises 328 residues: Transcription initiation factor TFIID subunit 8 (328 aa).

Residues 16 to 83 enclose the Histone-fold domain; that stretch reads RRILNKVVSQ…DVSLALINMG (68 aa). A disordered region spans residues 229-309; that stretch reads NRTEDEPSKD…PGTMPSRSLA (81 aa). Phosphoserine occurs at positions 236, 245, and 255. The segment covering 239–251 has biased composition (acidic residues); that stretch reads DGEEGDSENEEMD. Residues 252–264 are compositionally biased toward basic and acidic residues; sequence GDKSKEEKPELDI. Over residues 296 to 309 the composition is skewed to polar residues; it reads NCPTPGTMPSRSLA.

Belongs to the TAF8 family. In terms of assembly, belongs to the TFIID complex which is composed of TATA binding protein (Tbp) and a number of TBP-associated factors (TAFs). Histone fold interacts with N-terminus of Taf10b.

It is found in the nucleus. TFIID is a multimeric protein complex that plays a central role in mediating promoter responses to various activators and repressors. The protein is Transcription initiation factor TFIID subunit 8 of Drosophila melanogaster (Fruit fly).